A 768-amino-acid chain; its full sequence is Pentatricopeptide repeat-containing protein At4g01030, mitochondrial (768 aa).

The transit peptide at 1-25 (MYRFLGLTIHGGLIKRGLDNSDTRV) directs the protein to the mitochondrion. 16 PPR repeats span residues 22–52 (DTRV…MPKR), 53–87 (DDLA…GAKA), 88–122 (YDST…GLES), 123–153 (NVSM…MKDR), 154–188 (NLSS…GLKP), 189–223 (DIVT…GLKP), 224–254 (STSS…ILRN), 259–289 (DVYV…MDAK), 290–324 (NIVA…GIKP), 325–359 (DAIT…GVAP), 360–394 (NVVS…GVGP), 395–429 (NAAT…NLIC), 430–460 (DAYV…IKNK), 461–495 (SLAS…GMEP), 496–526 (DAIT…MRSR), and 532–562 (TIEH…MSLK). The segment at 567–642 (IWGAFLSSCK…QDLWSWIQID (76 aa)) is type E motif. Residues 643–673 (QTVHIFYAEGKTHPDEGDIYFELYKLVSEMK) form a type E(+) motif region. A type DYW motif region spans residues 674 to 768 (KSGYVPDTSC…DGKCSCNDSW (95 aa)).

It belongs to the PPR family. PCMP-H subfamily.

The protein localises to the mitochondrion. The sequence is that of Pentatricopeptide repeat-containing protein At4g01030, mitochondrial (PCMP-H65) from Arabidopsis thaliana (Mouse-ear cress).